The sequence spans 733 residues: Ferric aerobactin receptor (733 aa).

The first 25 residues, 1-25, serve as a signal peptide directing secretion; it reads MMISKKYTLWALNPLLLTMMAPAVA. Residues 31-38 carry the TonB box motif; it reads ETFVVSAN. In terms of domain architecture, TBDR plug spans 43–153; the sequence is TVAEMAQTTW…TGGLINIVTK (111 aa). Residues 158–733 form the TBDR beta-barrel domain; the sequence is ETIMEFEAGT…TFGLNYSVLF (576 aa). Positions 716–733 match the TonB C-terminal box motif; the sequence is YDYKGRGRTFGLNYSVLF.

It belongs to the TonB-dependent receptor family.

The protein localises to the cell outer membrane. In terms of biological role, receptor for aerobactin. The polypeptide is Ferric aerobactin receptor (iutA) (Klebsiella pneumoniae).